The following is a 225-amino-acid chain: Probable molybdenum cofactor guanylyltransferase (225 aa).

Residues 20-22 (LAG), Lys-33, Asp-88, and Asp-117 contribute to the GTP site. Asp-117 serves as a coordination point for Mg(2+).

Belongs to the MobA family. Requires Mg(2+) as cofactor.

The protein resides in the cytoplasm. It carries out the reaction Mo-molybdopterin + GTP + H(+) = Mo-molybdopterin guanine dinucleotide + diphosphate. In terms of biological role, transfers a GMP moiety from GTP to Mo-molybdopterin (Mo-MPT) cofactor (Moco or molybdenum cofactor) to form Mo-molybdopterin guanine dinucleotide (Mo-MGD) cofactor. This chain is Probable molybdenum cofactor guanylyltransferase, found in Methanosarcina acetivorans (strain ATCC 35395 / DSM 2834 / JCM 12185 / C2A).